Reading from the N-terminus, the 374-residue chain is Aminomethyltransferase (374 aa).

The protein belongs to the GcvT family. As to quaternary structure, the glycine cleavage system is composed of four proteins: P, T, L and H.

It catalyses the reaction N(6)-[(R)-S(8)-aminomethyldihydrolipoyl]-L-lysyl-[protein] + (6S)-5,6,7,8-tetrahydrofolate = N(6)-[(R)-dihydrolipoyl]-L-lysyl-[protein] + (6R)-5,10-methylene-5,6,7,8-tetrahydrofolate + NH4(+). Functionally, the glycine cleavage system catalyzes the degradation of glycine. The chain is Aminomethyltransferase from Edwardsiella ictaluri (strain 93-146).